A 542-amino-acid chain; its full sequence is Membrane protein insertase YidC (542 aa).

Transmembrane regions (helical) follow at residues 6–26, 326–346, 350–370, 421–441, 458–478, and 501–521; these read NILL…WQTD, LVVD…LLMF, FVGN…GGLY, GGCL…WVLL, LSVQ…MFLM, and VIFT…WLVG.

It belongs to the OXA1/ALB3/YidC family. Type 1 subfamily. In terms of assembly, interacts with the Sec translocase complex via SecD. Specifically interacts with transmembrane segments of nascent integral membrane proteins during membrane integration.

The protein localises to the cell inner membrane. Its function is as follows. Required for the insertion and/or proper folding and/or complex formation of integral membrane proteins into the membrane. Involved in integration of membrane proteins that insert both dependently and independently of the Sec translocase complex, as well as at least some lipoproteins. Aids folding of multispanning membrane proteins. The chain is Membrane protein insertase YidC from Shewanella frigidimarina (strain NCIMB 400).